We begin with the raw amino-acid sequence, 32 residues long: Delta-conotoxin EVIA (32 aa).

3 disulfides stabilise this stretch: C3-C21, C10-C25, and C20-C29. P6 bears the 4-hydroxyproline mark. L32 carries the leucine amide modification.

It belongs to the conotoxin O1 superfamily. As to expression, expressed by the venom duct.

The protein resides in the secreted. Its function is as follows. Delta-conotoxins bind to site 6 of voltage-gated sodium channels and inhibit the inactivation process. This toxin inhibits sodium channel inactivation in neuronal membranes from amphibians and mammals (Nav1.2a/SCN1A, Nav1.3/SCN3A and Nav1.6/SCN8A) upon binding to receptor site 6. The polypeptide is Delta-conotoxin EVIA (Conus ermineus (Agate cone)).